A 310-amino-acid polypeptide reads, in one-letter code: 4-hydroxyproline 2-epimerase (310 aa).

The active-site Proton acceptor is the Cys-88. Substrate is bound by residues 89-90 (GH), His-208, and Asp-232. The active-site Proton donor is Cys-236. 237-238 (GT) serves as a coordination point for substrate.

This sequence belongs to the proline racemase family.

It catalyses the reaction trans-4-hydroxy-L-proline = cis-4-hydroxy-D-proline. Catalyzes the epimerization of trans-4-hydroxy-L-proline (t4LHyp) to cis-4-hydroxy-D-proline (c4DHyp). Is likely involved in a degradation pathway that converts t4LHyp to alpha-ketoglutarate. Displays no proline racemase activity. In Acinetobacter baumannii (strain ATCC 17978 / DSM 105126 / CIP 53.77 / LMG 1025 / NCDC KC755 / 5377), this protein is 4-hydroxyproline 2-epimerase.